The following is a 558-amino-acid chain: Phosphatase and actin regulator 3 (558 aa).

Over residues 1–11 (MAASEDGSSCL) the composition is skewed to polar residues. Disordered stretches follow at residues 1–69 (MAAS…KLAT), 81–288 (KKKN…RPLP), and 300–366 (LATK…ENLM). Positions 18-33 (QSDPSFLSDSSATSTD) are enriched in low complexity. Thr-69 bears the Phosphothreonine mark. The RPEL 1 repeat unit spans residues 92–117 (SALEKKMAGRQGREELIKQGLLEMME). The segment covering 94 to 108 (LEKKMAGRQGREELI) has biased composition (basic and acidic residues). Polar residues predominate over residues 144-169 (ETLTSEGAQPGSPSASGTDQVSQDEL). Residues 228–239 (PSPPLLPTPPPK) are compositionally biased toward pro residues. Ser-229 carries the post-translational modification Phosphoserine. Thr-235 bears the Phosphothreonine mark. Composition is skewed to basic and acidic residues over residues 300–341 (LATK…RDEA) and 354–363 (ATKDSEENKE). RPEL repeat units lie at residues 400–425 (ELLA…PRRT), 438–463 (MKLS…KQRN), and 476–501 (QRLT…IRFS). A coiled-coil region spans residues 449 to 485 (AVEELERRNILKQRNDQTEQEERREIKQRLTRKLNQR).

Belongs to the phosphatase and actin regulator family. Binds PPP1CA and actin; thus inhibiting the protein phosphatase 1 (PP1) activity.

It localises to the nucleus matrix. This is Phosphatase and actin regulator 3 (Phactr3) from Mus musculus (Mouse).